Consider the following 931-residue polypeptide: Protocadherin gamma-B2 (931 aa).

Positions 1 to 30 are cleaved as a signal peptide; it reads MKASSGRCGLVRWLQVLLPFLLSLFPGALP. Cadherin domains follow at residues 31-133, 134-242, 243-347, 348-452, 453-562, and 570-675; these read VQIR…TPLF, KQTK…PPVF, SQDV…APEV, IVTS…APVF, QQTS…APRV, and DGSA…LPDL. Over 31 to 691 the chain is Extracellular; it reads VQIRYSIPEE…SDPQAELQFY (661 aa). 2 N-linked (GlcNAc...) asparagine glycosylation sites follow: N419 and N545. Residues 692–712 form a helical membrane-spanning segment; the sequence is LVVALALISVLFFLAVILAIS. Over 713–931 the chain is Cytoplasmic; that stretch reads LRLRRSSRSD…KKKSGKKEKK (219 aa). 2 disordered regions span residues 814-840 and 901-931; these read DWRFSQAQRPGTSGSQNGDDTGTWPNN and ATLTNAAGKRDGKAPAGGNGNKKKSGKKEKK. Residues 815 to 840 show a composition bias toward polar residues; that stretch reads WRFSQAQRPGTSGSQNGDDTGTWPNN. Positions 921-931 are enriched in basic residues; that stretch reads NKKKSGKKEKK.

The protein localises to the cell membrane. Functionally, potential calcium-dependent cell-adhesion protein. May be involved in the establishment and maintenance of specific neuronal connections in the brain. This is Protocadherin gamma-B2 (PCDHGB2) from Pan troglodytes (Chimpanzee).